The following is a 141-amino-acid chain: Large ribosomal subunit protein uL11 (141 aa).

It belongs to the universal ribosomal protein uL11 family. As to quaternary structure, part of the ribosomal stalk of the 50S ribosomal subunit. Interacts with L10 and the large rRNA to form the base of the stalk. L10 forms an elongated spine to which L12 dimers bind in a sequential fashion forming a multimeric L10(L12)X complex. One or more lysine residues are methylated.

Its function is as follows. Forms part of the ribosomal stalk which helps the ribosome interact with GTP-bound translation factors. This chain is Large ribosomal subunit protein uL11, found in Campylobacter fetus subsp. fetus (strain 82-40).